We begin with the raw amino-acid sequence, 54 residues long: ATP synthase protein 8 (54 aa).

A helical transmembrane segment spans residues 9-29 (WIINFFIVWTADFTLLIVLSI).

It belongs to the ATPase protein 8 family. F-type ATPases have 2 components, CF(1) - the catalytic core - and CF(0) - the membrane proton channel.

The protein localises to the mitochondrion membrane. Mitochondrial membrane ATP synthase (F(1)F(0) ATP synthase or Complex V) produces ATP from ADP in the presence of a proton gradient across the membrane which is generated by electron transport complexes of the respiratory chain. F-type ATPases consist of two structural domains, F(1) - containing the extramembraneous catalytic core and F(0) - containing the membrane proton channel, linked together by a central stalk and a peripheral stalk. During catalysis, ATP synthesis in the catalytic domain of F(1) is coupled via a rotary mechanism of the central stalk subunits to proton translocation. Part of the complex F(0) domain. Minor subunit located with subunit a in the membrane. The sequence is that of ATP synthase protein 8 (MT-ATP8) from Arbacia lixula (Black urchin).